Here is an 880-residue protein sequence, read N- to C-terminus: Valine--tRNA ligase (880 aa).

A 'HIGH' region motif is present at residues 51 to 61; it reads PNVTGELHLGH. The 'KMSKS' region motif lies at 529 to 533; it reads KMSKT. Lysine 532 contributes to the ATP binding site. A coiled-coil region spans residues 815-854; it reads MSTMVDLEAEAKRVEAEIAELETQIERLSARLSDTQFLAK.

Belongs to the class-I aminoacyl-tRNA synthetase family. ValS type 1 subfamily. As to quaternary structure, monomer.

The protein localises to the cytoplasm. It catalyses the reaction tRNA(Val) + L-valine + ATP = L-valyl-tRNA(Val) + AMP + diphosphate. Functionally, catalyzes the attachment of valine to tRNA(Val). As ValRS can inadvertently accommodate and process structurally similar amino acids such as threonine, to avoid such errors, it has a 'posttransfer' editing activity that hydrolyzes mischarged Thr-tRNA(Val) in a tRNA-dependent manner. This Dehalococcoides mccartyi (strain ATCC BAA-2266 / KCTC 15142 / 195) (Dehalococcoides ethenogenes (strain 195)) protein is Valine--tRNA ligase.